Reading from the N-terminus, the 302-residue chain is Sulfate adenylyltransferase subunit 2 (302 aa).

The protein belongs to the PAPS reductase family. CysD subfamily. As to quaternary structure, heterodimer composed of CysD, the smaller subunit, and CysN.

It catalyses the reaction sulfate + ATP + H(+) = adenosine 5'-phosphosulfate + diphosphate. Its pathway is sulfur metabolism; hydrogen sulfide biosynthesis; sulfite from sulfate: step 1/3. In terms of biological role, with CysN forms the ATP sulfurylase (ATPS) that catalyzes the adenylation of sulfate producing adenosine 5'-phosphosulfate (APS) and diphosphate, the first enzymatic step in sulfur assimilation pathway. APS synthesis involves the formation of a high-energy phosphoric-sulfuric acid anhydride bond driven by GTP hydrolysis by CysN coupled to ATP hydrolysis by CysD. This is Sulfate adenylyltransferase subunit 2 from Serratia proteamaculans (strain 568).